Reading from the N-terminus, the 341-residue chain is Ketol-acid reductoisomerase (NADP(+)) (341 aa).

Residues 2–181 enclose the KARI N-terminal Rossmann domain; it reads AKVYYNGDAN…GAARAGVLET (180 aa). NADP(+)-binding positions include 25 to 28, arginine 48, serine 52, and 82 to 85; these read YGSQ and DEKQ. Histidine 107 is an active-site residue. Glycine 133 serves as a coordination point for NADP(+). Residues 182 to 327 form the KARI C-terminal knotted domain; it reads TFKEETETDL…RELRSMMPFV (146 aa). Residues aspartate 190, glutamate 194, glutamate 226, and glutamate 230 each contribute to the Mg(2+) site. Residue serine 251 participates in substrate binding.

The protein belongs to the ketol-acid reductoisomerase family. Mg(2+) is required as a cofactor.

The enzyme catalyses (2R)-2,3-dihydroxy-3-methylbutanoate + NADP(+) = (2S)-2-acetolactate + NADPH + H(+). The catalysed reaction is (2R,3R)-2,3-dihydroxy-3-methylpentanoate + NADP(+) = (S)-2-ethyl-2-hydroxy-3-oxobutanoate + NADPH + H(+). It functions in the pathway amino-acid biosynthesis; L-isoleucine biosynthesis; L-isoleucine from 2-oxobutanoate: step 2/4. The protein operates within amino-acid biosynthesis; L-valine biosynthesis; L-valine from pyruvate: step 2/4. In terms of biological role, involved in the biosynthesis of branched-chain amino acids (BCAA). Catalyzes an alkyl-migration followed by a ketol-acid reduction of (S)-2-acetolactate (S2AL) to yield (R)-2,3-dihydroxy-isovalerate. In the isomerase reaction, S2AL is rearranged via a Mg-dependent methyl migration to produce 3-hydroxy-3-methyl-2-ketobutyrate (HMKB). In the reductase reaction, this 2-ketoacid undergoes a metal-dependent reduction by NADPH to yield (R)-2,3-dihydroxy-isovalerate. The polypeptide is Ketol-acid reductoisomerase (NADP(+)) (Geobacillus thermodenitrificans (strain NG80-2)).